Consider the following 546-residue polypeptide: Fusion glycoprotein F0 (546 aa).

Residues 1 to 19 (MGILFAALLAMTNPHLATG) form the signal peptide. At 20 to 491 (QIHWGNLSKI…NIKGVSVTNT (472 aa)) the chain is on the extracellular side. Asn-25, Asn-57, and Asn-63 each carry an N-linked (GlcNAc...) asparagine; by host glycan. A fusion peptide region spans residues 109–133 (FAGVVLAGAALGVATAAQITAGIAL). A coiled-coil region spans residues 134–162 (HQSMMNSQAIESLKASLETTNQAIEEIRQ). 4 cysteine pairs are disulfide-bonded: Cys-330–Cys-339, Cys-354–Cys-362, Cys-386–Cys-391, and Cys-393–Cys-416. The stretch at 458-483 (NLWNAVTKLEKAKDLLDSSDLILENI) forms a coiled coil. The chain crosses the membrane as a helical span at residues 492–512 (GYILVGVGLIAVVGILIITCC). The Cytoplasmic segment spans residues 513–546 (CKKRRTDNKVSTMVLNPGLRPDLTGTSKSYVRSL).

The protein belongs to the paramyxoviruses fusion glycoprotein family. In terms of assembly, homotrimer of disulfide-linked F1-F2. The inactive precursor F0 is glycosylated and proteolytically cleaved into F1 and F2 to be functionally active. The cleavage is mediated by cellular proteases during the transport and maturation of the polypeptide.

Its subcellular location is the virion membrane. It is found in the host cell membrane. In terms of biological role, class I viral fusion protein. Under the current model, the protein has at least 3 conformational states: pre-fusion native state, pre-hairpin intermediate state, and post-fusion hairpin state. During viral and plasma cell membrane fusion, the heptad repeat (HR) regions assume a trimer-of-hairpins structure, positioning the fusion peptide in close proximity to the C-terminal region of the ectodomain. The formation of this structure appears to drive apposition and subsequent fusion of viral and plasma cell membranes. Directs fusion of viral and cellular membranes leading to delivery of the nucleocapsid into the cytoplasm. This fusion is pH independent and occurs directly at the outer cell membrane. The trimer of F1-F2 (F protein) probably interacts with HN at the virion surface. Upon HN binding to its cellular receptor, the hydrophobic fusion peptide is unmasked and interacts with the cellular membrane, inducing the fusion between cell and virion membranes. Later in infection, F proteins expressed at the plasma membrane of infected cells could mediate fusion with adjacent cells to form syncytia, a cytopathic effect that could lead to tissue necrosis. This is Fusion glycoprotein F0 (F) from Bos indicus (Zebu).